Consider the following 85-residue polypeptide: Cell division topological specificity factor (85 aa).

This sequence belongs to the MinE family.

In terms of biological role, prevents the cell division inhibition by proteins MinC and MinD at internal division sites while permitting inhibition at polar sites. This ensures cell division at the proper site by restricting the formation of a division septum at the midpoint of the long axis of the cell. The protein is Cell division topological specificity factor of Shewanella baltica (strain OS223).